A 488-amino-acid chain; its full sequence is Probable malate:quinone oxidoreductase (488 aa).

The protein belongs to the MQO family. FAD serves as cofactor.

The catalysed reaction is (S)-malate + a quinone = a quinol + oxaloacetate. Its pathway is carbohydrate metabolism; tricarboxylic acid cycle; oxaloacetate from (S)-malate (quinone route): step 1/1. The polypeptide is Probable malate:quinone oxidoreductase (Neisseria meningitidis serogroup B (strain ATCC BAA-335 / MC58)).